A 502-amino-acid chain; its full sequence is MKIAVIGAGVTGLAAAARIASQGHEVTIFEKNNNVGGRMNQLKKDGFTFDMGPAIVMMPDVYKDVFTMCGKNYEDYIELRQLRYIYDVYFDRDDCITVPTDLAELQHMLESIEPGSTHGFMSFLTDVYKKYEIARRYFLERTYRKPSDFYNMTSLVQGAKLKTLNHADQLIEHYIDNEKIQKLLAFQTLYIGIDPKRGPSLYSIIPMIEMMFGVHFIKGGMYGMAQGLAQLNKDLGVNIELNAEIEQIIIDPKFKRADAIKVNGDIRKFDKILCTADFPSVAESLMPDFAPIKKYPPHKIADLDYSCSAFLMYIGIDIDVTDQVRLHNVIFADDFRGNIEEIFEGRLSHDPSIYVYVPAVADKSLAPQGQTGIYVLMPTPELKTGSGIDWSDEALTDQIKDVIYRKLATIEVFEDIKSHIVSETIFTPNDFEQTYHAKFGSAFGLMPTLAQSNYYRPQNVSRDYKDLYFAGASTHPGAGVPIVLTSAKITVDEMIKDIEQGV.

5–17 serves as a coordination point for FAD; the sequence is VIGAGVTGLAAAA.

The protein belongs to the carotenoid/retinoid oxidoreductase family. CrtN subfamily.

The catalysed reaction is 15-cis-4,4'-diapophytoene + 3 FAD + 3 H(+) = all-trans-4,4'-diaponeurosporene + 3 FADH2. Its pathway is carotenoid biosynthesis; staphyloxanthin biosynthesis; staphyloxanthin from farnesyl diphosphate: step 2/5. In terms of biological role, involved in the biosynthesis of the yellow-orange carotenoid staphyloxanthin, which plays a role in the virulence via its protective function against oxidative stress. Catalyzes three successive dehydrogenation reactions that lead to the introduction of three double bonds into 4,4'-diapophytoene (dehydrosqualene), with 4,4'-diapophytofluene and 4,4'-diapo-zeta-carotene as intermediates, and 4,4'-diaponeurosporene (the major deep-yellow pigment in staphylococci strains) as the end product. This is 4,4'-diapophytoene desaturase (4,4'-diaponeurosporene-forming) from Staphylococcus aureus (strain MRSA252).